Consider the following 1221-residue polypeptide: Phosphoenolpyruvate carboxylase 2 (1221 aa).

Residue H156 is part of the active site. Disordered stretches follow at residues 443 to 588 (TAAE…DPTF) and 642 to 661 (REPA…GGGG). 2 stretches are compositionally biased toward low complexity: residues 503–513 (TTTATAAAAAA) and 550–564 (PFRE…TAAS). Composition is skewed to gly residues over residues 565 to 575 (GGAGGGGGGGA) and 648 to 661 (AHGG…GGGG). Residue K886 is part of the active site.

This sequence belongs to the PEPCase type 1 family. Mg(2+) is required as a cofactor.

It localises to the cytoplasm. The enzyme catalyses oxaloacetate + phosphate = phosphoenolpyruvate + hydrogencarbonate. Functionally, through the carboxylation of phosphoenolpyruvate (PEP) it forms oxaloacetate, a four-carbon dicarboxylic acid source for the tricarboxylic acid cycle. The polypeptide is Phosphoenolpyruvate carboxylase 2 (Chlamydomonas reinhardtii (Chlamydomonas smithii)).